We begin with the raw amino-acid sequence, 223 residues long: Urease accessory protein UreG (223 aa).

The disordered stretch occupies residues 1–30; sequence MAKHSHDHTHDHHDRPRRVRKPGEPLRIGV. Residue 32–39 participates in GTP binding; the sequence is GPVGSGKT.

The protein belongs to the SIMIBI class G3E GTPase family. UreG subfamily. As to quaternary structure, homodimer. UreD, UreF and UreG form a complex that acts as a GTP-hydrolysis-dependent molecular chaperone, activating the urease apoprotein by helping to assemble the nickel containing metallocenter of UreC. The UreE protein probably delivers the nickel.

The protein localises to the cytoplasm. Facilitates the functional incorporation of the urease nickel metallocenter. This process requires GTP hydrolysis, probably effectuated by UreG. This Mycobacterium ulcerans (strain Agy99) protein is Urease accessory protein UreG.